A 152-amino-acid chain; its full sequence is Xanthine-guanine phosphoribosyltransferase (152 aa).

5-phospho-alpha-D-ribose 1-diphosphate is bound by residues 37-38, arginine 69, and 88-96; these read RG and DDLVDTGGT. Arginine 69 contributes to the GMP binding site. Aspartate 89 contacts Mg(2+). Guanine is bound by residues aspartate 92 and isoleucine 135. The xanthine site is built by aspartate 92 and isoleucine 135. Residues 92 to 96 and 134 to 135 contribute to the GMP site; these read DTGGT and WI.

It belongs to the purine/pyrimidine phosphoribosyltransferase family. XGPT subfamily. Homotetramer. It depends on Mg(2+) as a cofactor.

Its subcellular location is the cell inner membrane. It catalyses the reaction GMP + diphosphate = guanine + 5-phospho-alpha-D-ribose 1-diphosphate. It carries out the reaction XMP + diphosphate = xanthine + 5-phospho-alpha-D-ribose 1-diphosphate. The enzyme catalyses IMP + diphosphate = hypoxanthine + 5-phospho-alpha-D-ribose 1-diphosphate. It functions in the pathway purine metabolism; GMP biosynthesis via salvage pathway; GMP from guanine: step 1/1. It participates in purine metabolism; XMP biosynthesis via salvage pathway; XMP from xanthine: step 1/1. In terms of biological role, purine salvage pathway enzyme that catalyzes the transfer of the ribosyl-5-phosphate group from 5-phospho-alpha-D-ribose 1-diphosphate (PRPP) to the N9 position of the 6-oxopurines guanine and xanthine to form the corresponding ribonucleotides GMP (guanosine 5'-monophosphate) and XMP (xanthosine 5'-monophosphate), with the release of PPi. To a lesser extent, also acts on hypoxanthine. In Yersinia pseudotuberculosis serotype O:1b (strain IP 31758), this protein is Xanthine-guanine phosphoribosyltransferase.